Reading from the N-terminus, the 190-residue chain is Protein GrpE (190 aa).

Positions 1 to 31 (MTEEQKKYEDAENLESKSENPEEASAEKSEN) are enriched in basic and acidic residues. A disordered region spans residues 1–39 (MTEEQKKYEDAENLESKSENPEEASAEKSENGVEDLQAE).

It belongs to the GrpE family. In terms of assembly, homodimer.

The protein localises to the cytoplasm. Functionally, participates actively in the response to hyperosmotic and heat shock by preventing the aggregation of stress-denatured proteins, in association with DnaK and GrpE. It is the nucleotide exchange factor for DnaK and may function as a thermosensor. Unfolded proteins bind initially to DnaJ; upon interaction with the DnaJ-bound protein, DnaK hydrolyzes its bound ATP, resulting in the formation of a stable complex. GrpE releases ADP from DnaK; ATP binding to DnaK triggers the release of the substrate protein, thus completing the reaction cycle. Several rounds of ATP-dependent interactions between DnaJ, DnaK and GrpE are required for fully efficient folding. This is Protein GrpE from Zymomonas mobilis subsp. mobilis (strain ATCC 31821 / ZM4 / CP4).